The chain runs to 306 residues: Tryptophan 2,3-dioxygenase (306 aa).

The segment at 1 to 33 is disordered; it reads MQPPGDDAAPRCPFAGAHAPDAPHVPEAAGDDA. Residues 75-79, tyrosine 137, and arginine 141 each bind substrate; that span reads FIIQH. Histidine 264 is a binding site for heme. Threonine 278 contacts substrate.

The protein belongs to the tryptophan 2,3-dioxygenase family. In terms of assembly, homotetramer. Heme serves as cofactor.

The enzyme catalyses L-tryptophan + O2 = N-formyl-L-kynurenine. The protein operates within amino-acid degradation; L-tryptophan degradation via kynurenine pathway; L-kynurenine from L-tryptophan: step 1/2. In terms of biological role, heme-dependent dioxygenase that catalyzes the oxidative cleavage of the L-tryptophan (L-Trp) pyrrole ring and converts L-tryptophan to N-formyl-L-kynurenine. Catalyzes the oxidative cleavage of the indole moiety. The polypeptide is Tryptophan 2,3-dioxygenase (Burkholderia pseudomallei (strain 668)).